Here is a 193-residue protein sequence, read N- to C-terminus: Chaperone protein TorD (193 aa).

This sequence belongs to the TorD/DmsD family. TorD subfamily.

Its subcellular location is the cytoplasm. In terms of biological role, involved in the biogenesis of TorA. Acts on TorA before the insertion of the molybdenum cofactor and, as a result, probably favors a conformation of the apoenzyme that is competent for acquiring the cofactor. In Histophilus somni (strain 129Pt) (Haemophilus somnus), this protein is Chaperone protein TorD.